The primary structure comprises 74 residues: Tetrahydromethanopterin S-methyltransferase subunit G (74 aa).

Residues 47 to 67 (VGIAYGLAIGFIFVYVLGTVL) form a helical membrane-spanning segment.

The protein belongs to the MtrG family. As to quaternary structure, the complex is composed of 8 subunits; MtrA, MtrB, MtrC, MtrD, MtrE, MtrF, MtrG and MtrH.

The protein resides in the cell membrane. The catalysed reaction is 5-methyl-5,6,7,8-tetrahydromethanopterin + coenzyme M + 2 Na(+)(in) = 5,6,7,8-tetrahydromethanopterin + methyl-coenzyme M + 2 Na(+)(out). The protein operates within one-carbon metabolism; methanogenesis from CO(2); methyl-coenzyme M from 5,10-methylene-5,6,7,8-tetrahydromethanopterin: step 2/2. In terms of biological role, part of a complex that catalyzes the formation of methyl-coenzyme M and tetrahydromethanopterin from coenzyme M and methyl-tetrahydromethanopterin. This is an energy-conserving, sodium-ion translocating step. The protein is Tetrahydromethanopterin S-methyltransferase subunit G of Methanococcus maripaludis (strain DSM 14266 / JCM 13030 / NBRC 101832 / S2 / LL).